The primary structure comprises 725 residues: Probable alpha-galactosidase G (725 aa).

The N-linked (GlcNAc...) asparagine glycan is linked to N407. The active-site Nucleophile is D484. Residue N490 is glycosylated (N-linked (GlcNAc...) asparagine). D546 acts as the Proton donor in catalysis. N-linked (GlcNAc...) asparagine glycosylation is present at N672.

This sequence belongs to the glycosyl hydrolase 36 family. Homotetramer. Mg(2+) is required as a cofactor. The cofactor is NAD(+).

It localises to the secreted. It carries out the reaction Hydrolysis of terminal, non-reducing alpha-D-galactose residues in alpha-D-galactosides, including galactose oligosaccharides, galactomannans and galactolipids.. Functionally, hydrolyzes a variety of simple alpha-D-galactoside as well as more complex molecules such as oligosaccharides and polysaccharides. The chain is Probable alpha-galactosidase G (aglG) from Aspergillus terreus (strain NIH 2624 / FGSC A1156).